The primary structure comprises 344 residues: Phenylalanine--tRNA ligase alpha subunit (344 aa).

E261 lines the Mg(2+) pocket.

It belongs to the class-II aminoacyl-tRNA synthetase family. Phe-tRNA synthetase alpha subunit type 1 subfamily. As to quaternary structure, tetramer of two alpha and two beta subunits. The cofactor is Mg(2+).

It is found in the cytoplasm. The enzyme catalyses tRNA(Phe) + L-phenylalanine + ATP = L-phenylalanyl-tRNA(Phe) + AMP + diphosphate + H(+). This chain is Phenylalanine--tRNA ligase alpha subunit, found in Ehrlichia ruminantium (strain Gardel).